Consider the following 1013-residue polypeptide: Ephrin type-A receptor 5 (1013 aa).

The signal sequence occupies residues Met1–Ala31. The Extracellular portion of the chain corresponds to Ser32 to Pro549. The 179-residue stretch at Glu36 to Arg214 folds into the Eph LBD domain. Asn240, Asn275, Asn345, Asn399, Asn412, and Asn437 each carry an N-linked (GlcNAc...) asparagine glycan. Fibronectin type-III domains follow at residues Pro333–Ala443 and Ala444–Val538. Residues Ile550–Leu570 form a helical membrane-spanning segment. Topologically, residues Ser571–Leu1013 are cytoplasmic. A phosphotyrosine; by autocatalysis mark is found at Tyr626 and Tyr632. The Protein kinase domain maps to Ile651–Ile912. ATP is bound by residues Ile657–Val665 and Lys683. Asp776 acts as the Proton acceptor in catalysis. Phosphotyrosine; by autocatalysis occurs at positions 809 and 958. The 73-residue stretch at Gly941–Leu1013 folds into the SAM domain. The short motif at Val1011–Leu1013 is the PDZ-binding element.

The protein belongs to the protein kinase superfamily. Tyr protein kinase family. Ephrin receptor subfamily. Heterotetramer upon binding of the ligand. The heterotetramer is composed of an ephrin dimer and a receptor dimer. Oligomerization is probably required to induce biological responses. Post-translationally, phosphorylated. Phosphorylation is stimulated by the ligand EFNA5. In terms of tissue distribution, detected in the 10-day embryonic brain, weaker expression in the rest of the 10-day embryo. Undetected in adult tissues.

It is found in the cell membrane. The protein localises to the cell projection. It localises to the axon. Its subcellular location is the dendrite. The catalysed reaction is L-tyrosyl-[protein] + ATP = O-phospho-L-tyrosyl-[protein] + ADP + H(+). Its function is as follows. Receptor tyrosine kinase which binds promiscuously GPI-anchored ephrin-A family ligands residing on adjacent cells, leading to contact-dependent bidirectional signaling into neighboring cells. The signaling pathway downstream of the receptor is referred to as forward signaling while the signaling pathway downstream of the ephrin ligand is referred to as reverse signaling. Among GPI-anchored ephrin-A ligands, EFNA5 most probably constitutes the cognate/functional ligand for EPHA5. Functions as an axon guidance molecule during development and may be involved in the development of the retinotectal, entorhino-hippocampal and hippocamposeptal pathways. Together with EFNA5 plays also a role in synaptic plasticity in adult brain through regulation of synaptogenesis. The protein is Ephrin type-A receptor 5 (EPHA5) of Gallus gallus (Chicken).